The following is an 852-amino-acid chain: Alanine--tRNA ligase (852 aa).

4 residues coordinate Zn(2+): His554, His558, Cys656, and His660.

This sequence belongs to the class-II aminoacyl-tRNA synthetase family. It depends on Zn(2+) as a cofactor.

Its subcellular location is the cytoplasm. The catalysed reaction is tRNA(Ala) + L-alanine + ATP = L-alanyl-tRNA(Ala) + AMP + diphosphate. Functionally, catalyzes the attachment of alanine to tRNA(Ala) in a two-step reaction: alanine is first activated by ATP to form Ala-AMP and then transferred to the acceptor end of tRNA(Ala). Also edits incorrectly charged Ser-tRNA(Ala) and Gly-tRNA(Ala) via its editing domain. The protein is Alanine--tRNA ligase of Campylobacter curvus (strain 525.92).